Consider the following 178-residue polypeptide: Cysteine-rich venom protein VAR3 (178 aa).

The signal sequence occupies residues 1–22; sequence MILLKLYLTLAAILCQSRGTTS. The SCP domain occupies 41-169; the sequence is NKHNDLRRTV…PLKYFLVCQY (129 aa). Cystine bridges form between C77/C156, C95/C170, and C151/C167.

It belongs to the CRISP family. Post-translationally, contains 8 disulfide bonds. In terms of tissue distribution, expressed by the venom gland.

It is found in the secreted. Its function is as follows. Blocks ryanodine receptors, and potassium channels. This Varanus acanthurus (Ridge-tailed monitor) protein is Cysteine-rich venom protein VAR3.